A 2512-amino-acid chain; its full sequence is Fatty acid synthase (2512 aa).

Glu-2 is subject to N-acetylglutamate. One can recognise a Ketosynthase family 3 (KS3) domain in the interval 2 to 406; that stretch reads EDVVIAGIAG…GSNAHVILRP (405 aa). Active-site for beta-ketoacyl synthase activity residues include Cys-161, His-293, and His-331. Residues 427-815 form an acyl and malonyl transferases region; it reads GRTQEAVEIL…GINVLGNNLF (389 aa). The active-site For acyl/malonyl transferase activity is the Ser-580. An acyl-CoA-binding positions include 646–647, Phe-670, and Arg-772; that span reads DT. The N-terminal hotdog fold stretch occupies residues 844-967; sequence PKAEDFPSGS…ISLLENDALK (124 aa). The PKS/mFAS DH domain maps to 844 to 1111; that stretch reads PKAEDFPSGS…ASVAPRRQQE (268 aa). The Proton acceptor; for dehydratase activity role is filled by His-878. Positions 984–1111 are C-terminal hotdog fold; the sequence is AKSGLLMEDV…ASVAPRRQQE (128 aa). The active-site Proton donor; for dehydratase activity is the Asp-1034. Cys-1475 is modified (S-nitrosocysteine). The segment at 1638–1866 is enoyl reductase; it reads WEVPENWTLE…MIKIQEEEKQ (229 aa). 1675–1692 provides a ligand contact to NADP(+); it reads VLIHSGSGGVGQAAIAIA. Lys-1708 is subject to N6-(pyridoxal phosphate)lysine. The beta-ketoacyl reductase stretch occupies residues 1867–2119; sequence YPLRSEPVKL…SFVLAEKVSV (253 aa). 1889–1904 contacts NADP(+); it reads SYIITGGLGGFGLELA. Cys-2093 bears the S-nitrosocysteine mark. A Carrier domain is found at 2120–2200; that stretch reads KSEGGSQRDL…ELSSKTGTAE (81 aa). The residue at position 2158 (Ser-2158) is an O-(pantetheine 4'-phosphoryl)serine. Residues 2209–2511 form a thioesterase region; that stretch reads KTGPGEPPKL…LAEPRVSVRE (303 aa). Active-site for thioesterase activity residues include Ser-2309 and His-2482.

In terms of assembly, homodimer which is arranged in a head to tail fashion. In terms of processing, S-nitrosylation of Fatty acid synthase at cysteine residues Cys-1475 or Cys-2093 is important for the enzyme dimerization. In adipocytes, S-nitrosylation of Fatty acid synthase occurs under physiological conditions and gradually increases during adipogenesis.

The enzyme catalyses acetyl-CoA + n malonyl-CoA + 2n NADPH + 2n H(+) = a long-chain fatty acid + (n+1) CoA + n CO2 + 2n NADP(+).. It catalyses the reaction holo-[ACP] + acetyl-CoA = acetyl-[ACP] + CoA. The catalysed reaction is holo-[ACP] + malonyl-CoA = malonyl-[ACP] + CoA. It carries out the reaction a fatty acyl-[ACP] + malonyl-[ACP] + H(+) = a 3-oxoacyl-[ACP] + holo-[ACP] + CO2. The enzyme catalyses a (3R)-hydroxyacyl-[ACP] + NADP(+) = a 3-oxoacyl-[ACP] + NADPH + H(+). It catalyses the reaction a (3R)-hydroxyacyl-[ACP] = a (2E)-enoyl-[ACP] + H2O. The catalysed reaction is a 2,3-saturated acyl-[ACP] + NADP(+) = a (2E)-enoyl-[ACP] + NADPH + H(+). It carries out the reaction hexadecanoyl-[ACP] + H2O = hexadecanoate + holo-[ACP] + H(+). The enzyme catalyses acetyl-[ACP] + malonyl-[ACP] + H(+) = 3-oxobutanoyl-[ACP] + holo-[ACP] + CO2. It catalyses the reaction 3-oxobutanoyl-[ACP] + NADPH + H(+) = (3R)-hydroxybutanoyl-[ACP] + NADP(+). The catalysed reaction is (3R)-hydroxybutanoyl-[ACP] = (2E)-butenoyl-[ACP] + H2O. It carries out the reaction (2E)-butenoyl-[ACP] + NADPH + H(+) = butanoyl-[ACP] + NADP(+). The enzyme catalyses butanoyl-[ACP] + malonyl-[ACP] + H(+) = 3-oxohexanoyl-[ACP] + holo-[ACP] + CO2. It catalyses the reaction 3-oxohexanoyl-[ACP] + NADPH + H(+) = (3R)-hydroxyhexanoyl-[ACP] + NADP(+). The catalysed reaction is (3R)-hydroxyhexanoyl-[ACP] = (2E)-hexenoyl-[ACP] + H2O. It carries out the reaction (2E)-hexenoyl-[ACP] + NADPH + H(+) = hexanoyl-[ACP] + NADP(+). The enzyme catalyses hexanoyl-[ACP] + malonyl-[ACP] + H(+) = 3-oxooctanoyl-[ACP] + holo-[ACP] + CO2. It catalyses the reaction 3-oxooctanoyl-[ACP] + NADPH + H(+) = (3R)-hydroxyoctanoyl-[ACP] + NADP(+). The catalysed reaction is (3R)-hydroxyoctanoyl-[ACP] = (2E)-octenoyl-[ACP] + H2O. It carries out the reaction (2E)-octenoyl-[ACP] + NADPH + H(+) = octanoyl-[ACP] + NADP(+). The enzyme catalyses octanoyl-[ACP] + malonyl-[ACP] + H(+) = 3-oxodecanoyl-[ACP] + holo-[ACP] + CO2. It catalyses the reaction 3-oxodecanoyl-[ACP] + NADPH + H(+) = (3R)-hydroxydecanoyl-[ACP] + NADP(+). The catalysed reaction is (3R)-hydroxydecanoyl-[ACP] = (2E)-decenoyl-[ACP] + H2O. It carries out the reaction (2E)-decenoyl-[ACP] + NADPH + H(+) = decanoyl-[ACP] + NADP(+). The enzyme catalyses decanoyl-[ACP] + malonyl-[ACP] + H(+) = 3-oxododecanoyl-[ACP] + holo-[ACP] + CO2. It catalyses the reaction 3-oxododecanoyl-[ACP] + NADPH + H(+) = (3R)-hydroxydodecanoyl-[ACP] + NADP(+). The catalysed reaction is (3R)-hydroxydodecanoyl-[ACP] = (2E)-dodecenoyl-[ACP] + H2O. It carries out the reaction (2E)-dodecenoyl-[ACP] + NADPH + H(+) = dodecanoyl-[ACP] + NADP(+). The enzyme catalyses dodecanoyl-[ACP] + malonyl-[ACP] + H(+) = 3-oxotetradecanoyl-[ACP] + holo-[ACP] + CO2. It catalyses the reaction 3-oxotetradecanoyl-[ACP] + NADPH + H(+) = (3R)-hydroxytetradecanoyl-[ACP] + NADP(+). The catalysed reaction is (3R)-hydroxytetradecanoyl-[ACP] = (2E)-tetradecenoyl-[ACP] + H2O. It carries out the reaction (2E)-tetradecenoyl-[ACP] + NADPH + H(+) = tetradecanoyl-[ACP] + NADP(+). The enzyme catalyses tetradecanoyl-[ACP] + malonyl-[ACP] + H(+) = 3-oxohexadecanoyl-[ACP] + holo-[ACP] + CO2. It catalyses the reaction 3-oxohexadecanoyl-[ACP] + NADPH + H(+) = (3R)-hydroxyhexadecanoyl-[ACP] + NADP(+). The catalysed reaction is (3R)-hydroxyhexadecanoyl-[ACP] = (2E)-hexadecenoyl-[ACP] + H2O. It carries out the reaction (2E)-hexadecenoyl-[ACP] + NADPH + H(+) = hexadecanoyl-[ACP] + NADP(+). The enzyme catalyses hexadecanoyl-[ACP] + malonyl-[ACP] + H(+) = 3-oxooctadecanoyl-[ACP] + holo-[ACP] + CO2. It catalyses the reaction 3-oxooctadecanoyl-[ACP] + NADPH + H(+) = (3R)-hydroxyoctadecanoyl-[ACP] + NADP(+). The catalysed reaction is (3R)-hydroxyoctadecanoyl-[ACP] = (2E)-octadecenoyl-[ACP] + H2O. It carries out the reaction (2E)-octadecenoyl-[ACP] + NADPH + H(+) = octadecanoyl-[ACP] + NADP(+). The enzyme catalyses tetradecanoyl-[ACP] + H2O = tetradecanoate + holo-[ACP] + H(+). It catalyses the reaction octadecanoyl-[ACP] + H2O = octadecanoate + holo-[ACP] + H(+). The protein operates within lipid metabolism; fatty acid biosynthesis. With respect to regulation, cerulenin, a potent non-competitive pharmacological inhibitor of FAS, binds covalently to the active site of the condensing enzyme region, inactivating a key enzyme step in fatty acid synthesis. Its function is as follows. Fatty acid synthetase is a multifunctional enzyme that catalyzes the de novo biosynthesis of long-chain saturated fatty acids starting from acetyl-CoA and malonyl-CoA in the presence of NADPH. This multifunctional protein contains 7 catalytic activities and a site for the binding of the prosthetic group 4'-phosphopantetheine of the acyl carrier protein ([ACP]) domain. In Gallus gallus (Chicken), this protein is Fatty acid synthase (FASN).